The sequence spans 399 residues: Formate-dependent phosphoribosylglycinamide formyltransferase (399 aa).

N(1)-(5-phospho-beta-D-ribosyl)glycinamide is bound by residues 22-23 and glutamate 82; that span reads EL. ATP is bound by residues arginine 114, lysine 155, 160 to 165, 195 to 198, and glutamate 203; these read SSGKGQ and EKMI. In terms of domain architecture, ATP-grasp spans 119-308; the sequence is RLAAETLHLL…EFALHVRAFL (190 aa). Residues glutamate 267 and glutamate 279 each contribute to the Mg(2+) site. N(1)-(5-phospho-beta-D-ribosyl)glycinamide contacts are provided by residues aspartate 286, lysine 355, and 362 to 363; that span reads RR.

The protein belongs to the PurK/PurT family. As to quaternary structure, homodimer.

The catalysed reaction is N(1)-(5-phospho-beta-D-ribosyl)glycinamide + formate + ATP = N(2)-formyl-N(1)-(5-phospho-beta-D-ribosyl)glycinamide + ADP + phosphate + H(+). It participates in purine metabolism; IMP biosynthesis via de novo pathway; N(2)-formyl-N(1)-(5-phospho-D-ribosyl)glycinamide from N(1)-(5-phospho-D-ribosyl)glycinamide (formate route): step 1/1. Functionally, involved in the de novo purine biosynthesis. Catalyzes the transfer of formate to 5-phospho-ribosyl-glycinamide (GAR), producing 5-phospho-ribosyl-N-formylglycinamide (FGAR). Formate is provided by PurU via hydrolysis of 10-formyl-tetrahydrofolate. This Proteus mirabilis (strain HI4320) protein is Formate-dependent phosphoribosylglycinamide formyltransferase.